The primary structure comprises 1001 residues: RNA-binding protein 12B (1001 aa).

Serine 98, serine 101, and serine 112 each carry phosphoserine. Lysine 114 is covalently cross-linked (Glycyl lysine isopeptide (Lys-Gly) (interchain with G-Cter in SUMO2)). A compositionally biased stretch (polar residues) spans 119–128 (NSGYGSSINQ). Positions 119-147 (NSGYGSSINQDAGFHTNGTGHGNLRPRKT) are disordered. A Glycyl lysine isopeptide (Lys-Gly) (interchain with G-Cter in SUMO2) cross-link involves residue lysine 151. Residues 155-230 (PYLFLRGLPY…RFIEVMQGSE (76 aa)) form the RRM 1 domain. Residues 247–262 (LRRSEEHSPPRGINDR) show a composition bias toward basic and acidic residues. The disordered stretch occupies residues 247-278 (LRRSEEHSPPRGINDRHFRKRSHSKSPRRTRS). Serine 250 and serine 254 each carry phosphoserine. Positions 263-278 (HFRKRSHSKSPRRTRS) are enriched in basic residues. At threonine 276 the chain carries Phosphothreonine. Residues serine 278, serine 280, serine 292, and serine 294 each carry the phosphoserine modification. The RRM 2 domain maps to 284–360 (FYVHLKNLSL…RPVHIDPISR (77 aa)). N6-acetyllysine is present on lysine 319. Lysine 335 is covalently cross-linked (Glycyl lysine isopeptide (Lys-Gly) (interchain with G-Cter in SUMO2)). Residue serine 377 is modified to Phosphoserine. The region spanning 400–477 (LCIYIRNFPF…TEVLLRLISE (78 aa)) is the RRM 3 domain. Glycyl lysine isopeptide (Lys-Gly) (interchain with G-Cter in SUMO2) cross-links involve residues lysine 514 and lysine 541. Positions 544–587 (QRDFRQPDRHPPEDFRHSSEDFRFPPEDFRHSPEDFRRPREEDF) are disordered. Phosphoserine occurs at positions 575, 591, and 638. Over residues 631–881 (LEEDFRRSPT…FRSPPDDFRS (251 aa)) the composition is skewed to basic and acidic residues. Residues 631 to 882 (LEEDFRRSPT…RSPPDDFRSH (252 aa)) are disordered. Phosphothreonine is present on threonine 640. Phosphoserine is present on residues serine 710 and serine 718. Lysine 895 participates in a covalent cross-link: Glycyl lysine isopeptide (Lys-Gly) (interchain with G-Cter in SUMO2). The RRM 4 domain occupies 925–1001 (TPIKIMNLPF…GPRKVKLTLL (77 aa)).

This chain is RNA-binding protein 12B (RBM12B), found in Homo sapiens (Human).